We begin with the raw amino-acid sequence, 336 residues long: COP9 signalosome complex subunit 5 (336 aa).

The MPN domain occupies 44–181; that stretch reads VRISSVAMIK…IGAFRTIPEG (138 aa). Positions 127, 129, and 140 each coordinate Zn(2+). The short motif at 127-140 is the JAMM motif element; the sequence is HSHPGYGCWLSGID.

Belongs to the peptidase M67A family. CSN5 subfamily. As to quaternary structure, component of the COP9 signalosome (CSN) complex.

It is found in the cytoplasm. Its subcellular location is the nucleus. Functionally, catalytic component of the COP9 signalosome (CSN) complex that acts as an regulator of the ubiquitin (Ubl) conjugation pathway by mediating the deneddylation of the cullin subunit of SCF-type E3 ubiquitin-protein ligase complexes. The CSN complex is involved in the regulation of the circadian clock through its control of the stability of the SCF(FWD-1) complex. This Neurospora crassa (strain ATCC 24698 / 74-OR23-1A / CBS 708.71 / DSM 1257 / FGSC 987) protein is COP9 signalosome complex subunit 5 (csn-5).